The primary structure comprises 132 residues: Small ribosomal subunit protein uS8 (132 aa).

Belongs to the universal ribosomal protein uS8 family. Part of the 30S ribosomal subunit. Contacts proteins S5 and S12.

Its function is as follows. One of the primary rRNA binding proteins, it binds directly to 16S rRNA central domain where it helps coordinate assembly of the platform of the 30S subunit. The chain is Small ribosomal subunit protein uS8 from Bacillus anthracis (strain A0248).